We begin with the raw amino-acid sequence, 37 residues long: Large ribosomal subunit protein bL36c (37 aa).

It belongs to the bacterial ribosomal protein bL36 family.

It localises to the plastid. The protein localises to the chloroplast. The chain is Large ribosomal subunit protein bL36c from Lactuca sativa (Garden lettuce).